The chain runs to 208 residues: Recombination protein RecR (208 aa).

The C4-type zinc-finger motif lies at 60–75 (CKVCHNICDDEVCSIC). Residues 83–178 (SLVCVVENIK…RISVIARGVS (96 aa)) enclose the Toprim domain.

Belongs to the RecR family.

In terms of biological role, may play a role in DNA repair. It seems to be involved in an RecBC-independent recombinational process of DNA repair. It may act with RecF and RecO. The polypeptide is Recombination protein RecR (Parabacteroides distasonis (strain ATCC 8503 / DSM 20701 / CIP 104284 / JCM 5825 / NCTC 11152)).